The sequence spans 1146 residues: ATP-dependent helicase/deoxyribonuclease subunit B (1146 aa).

In terms of domain architecture, UvrD-like helicase ATP-binding spans M1 to S280. ATP is bound at residue G8 to T15. Residues L276–S584 form the UvrD-like helicase C-terminal domain. [4Fe-4S] cluster is bound by residues C786, C1105, C1108, and C1114.

Belongs to the helicase family. AddB/RexB type 1 subfamily. Heterodimer of AddA and AddB. It depends on Mg(2+) as a cofactor. [4Fe-4S] cluster serves as cofactor.

Its function is as follows. The heterodimer acts as both an ATP-dependent DNA helicase and an ATP-dependent, dual-direction single-stranded exonuclease. Recognizes the chi site generating a DNA molecule suitable for the initiation of homologous recombination. The AddB subunit has 5' -&gt; 3' nuclease activity but not helicase activity. The protein is ATP-dependent helicase/deoxyribonuclease subunit B of Acetivibrio thermocellus (strain ATCC 27405 / DSM 1237 / JCM 9322 / NBRC 103400 / NCIMB 10682 / NRRL B-4536 / VPI 7372) (Clostridium thermocellum).